The following is a 176-amino-acid chain: Ribosome maturation factor RimM (176 aa).

One can recognise a PRC barrel domain in the interval 97 to 176 (EDEFYWRDLI…QIIVDWDPDF (80 aa)).

The protein belongs to the RimM family. As to quaternary structure, binds ribosomal protein uS19.

It localises to the cytoplasm. An accessory protein needed during the final step in the assembly of 30S ribosomal subunit, possibly for assembly of the head region. Essential for efficient processing of 16S rRNA. May be needed both before and after RbfA during the maturation of 16S rRNA. It has affinity for free ribosomal 30S subunits but not for 70S ribosomes. This chain is Ribosome maturation factor RimM, found in Shewanella amazonensis (strain ATCC BAA-1098 / SB2B).